The primary structure comprises 1101 residues: Type VI secretion system component TssM1 (1101 aa).

The chain crosses the membrane as a helical span at residues 371–391; sequence LTIGALSATALVVLAVTAVWI.

It is found in the cell inner membrane. In terms of biological role, core component of the type VI (T6SS) secretion system that plays a role in the release of toxins targeting both eukaryotic and prokaryotic species. Plays an essential role in stabilization of assembled TssK1 structure at a fixed perimembrane site. The protein is Type VI secretion system component TssM1 of Pseudomonas aeruginosa (strain ATCC 15692 / DSM 22644 / CIP 104116 / JCM 14847 / LMG 12228 / 1C / PRS 101 / PAO1).